The sequence spans 794 residues: MTDTQAAAERIAQLRTELDTHNYRYYVLDEPSIPDAEYDRLFRELQALEAEHPQLLTPDSPTQRVSGTPASAFGEVRHEIPMLSLGNAFEEQDLLDFDRRVREGLADLLPGGDLLGGGAEVEYSCEPKLDGLAVSLLYENGQLVRGATRGDGSTGEDITSNVRTIRNVPLKLHGEGWPDILEVRGEVFMSRAGFEALNAKAVETGGKTFANPRNAAAGSLRQLDSKITASRPLEFCAYGFGRVSGTLPDTQVGILEAFRGWGIPISRELRLVKGAQACRDYYDDIGRRRDALAYEIDGVVFKVNRIAFQRELGFRAREPRWAIAHKFPAREELTELLGVEFQVGRTGAVTPVARLKPVQVAGVTVSNATLHNMDEVARLGLRIGDTVVIRRAGDVIPQVMQVVLERRPADAQPIEVPEHCPVCGSAVERTQLVRRSKGRESLSEGAIYRCVGRLSCQAQLKQAIIHFVSRRAMDIDGLGDKIVEQLVDRGLVASPADLYTLTYDQVFELEGFAELSTNNLLAAIADSRTPSLARFIFALGIPDVGEETAKLLARSLGSLERIGKALPEVLTYLPDVGAEVAYEIHNFFADEHNRQVIAQLRDAEHGVQLQEEGEVAAEFAACASLAGFIDKLNIPFIAATGAEKLASRFGSLDGIIRADWLDLRQVERLPERAAKSLRDFLDEPANVQRALAIEAQLREFGMHWQSERKAVEGLPLAGQTWVLTGTLEAMSRDVAKEKLEGLGAKVAGSVSARTHCVVAGPGAGSKLAKANELGLKVLDEDGLLKLLDEYGVAH.

NAD(+)-binding positions include 35 to 39 (DAEYD), 84 to 85 (SL), and Glu-126. Lys-128 functions as the N6-AMP-lysine intermediate in the catalytic mechanism. Residues Arg-149, Glu-186, Lys-302, and Lys-326 each coordinate NAD(+). Zn(2+) contacts are provided by Cys-420, Cys-423, Cys-450, and Cys-456. Residues 711 to 794 (VEGLPLAGQT…KLLDEYGVAH (84 aa)) form the BRCT domain.

It belongs to the NAD-dependent DNA ligase family. LigA subfamily. Mg(2+) is required as a cofactor. The cofactor is Mn(2+).

The catalysed reaction is NAD(+) + (deoxyribonucleotide)n-3'-hydroxyl + 5'-phospho-(deoxyribonucleotide)m = (deoxyribonucleotide)n+m + AMP + beta-nicotinamide D-nucleotide.. Its function is as follows. DNA ligase that catalyzes the formation of phosphodiester linkages between 5'-phosphoryl and 3'-hydroxyl groups in double-stranded DNA using NAD as a coenzyme and as the energy source for the reaction. It is essential for DNA replication and repair of damaged DNA. In Pseudomonas paraeruginosa (strain DSM 24068 / PA7) (Pseudomonas aeruginosa (strain PA7)), this protein is DNA ligase.